The chain runs to 484 residues: Regulatory protein ViaA (484 aa).

It belongs to the ViaA family. Homodimer. Interacts with RavA.

Its subcellular location is the cytoplasm. Its function is as follows. Component of the RavA-ViaA chaperone complex, which may act on the membrane to optimize the function of some of the respiratory chains. ViaA stimulates the ATPase activity of RavA. The polypeptide is Regulatory protein ViaA (Edwardsiella ictaluri (strain 93-146)).